Consider the following 256-residue polypeptide: Imidazole glycerol phosphate synthase subunit HisF (256 aa).

Active-site residues include D12 and D131.

This sequence belongs to the HisA/HisF family. Heterodimer of HisH and HisF.

The protein localises to the cytoplasm. It catalyses the reaction 5-[(5-phospho-1-deoxy-D-ribulos-1-ylimino)methylamino]-1-(5-phospho-beta-D-ribosyl)imidazole-4-carboxamide + L-glutamine = D-erythro-1-(imidazol-4-yl)glycerol 3-phosphate + 5-amino-1-(5-phospho-beta-D-ribosyl)imidazole-4-carboxamide + L-glutamate + H(+). The protein operates within amino-acid biosynthesis; L-histidine biosynthesis; L-histidine from 5-phospho-alpha-D-ribose 1-diphosphate: step 5/9. Functionally, IGPS catalyzes the conversion of PRFAR and glutamine to IGP, AICAR and glutamate. The HisF subunit catalyzes the cyclization activity that produces IGP and AICAR from PRFAR using the ammonia provided by the HisH subunit. The chain is Imidazole glycerol phosphate synthase subunit HisF from Micrococcus luteus (strain ATCC 4698 / DSM 20030 / JCM 1464 / CCM 169 / CCUG 5858 / IAM 1056 / NBRC 3333 / NCIMB 9278 / NCTC 2665 / VKM Ac-2230) (Micrococcus lysodeikticus).